A 284-amino-acid chain; its full sequence is Bifunctional protein FolD 1 (284 aa).

NADP(+) is bound by residues 166–168 (GAS), Ser-191, and Ile-232.

The protein belongs to the tetrahydrofolate dehydrogenase/cyclohydrolase family. Homodimer.

The enzyme catalyses (6R)-5,10-methylene-5,6,7,8-tetrahydrofolate + NADP(+) = (6R)-5,10-methenyltetrahydrofolate + NADPH. The catalysed reaction is (6R)-5,10-methenyltetrahydrofolate + H2O = (6R)-10-formyltetrahydrofolate + H(+). It participates in one-carbon metabolism; tetrahydrofolate interconversion. Catalyzes the oxidation of 5,10-methylenetetrahydrofolate to 5,10-methenyltetrahydrofolate and then the hydrolysis of 5,10-methenyltetrahydrofolate to 10-formyltetrahydrofolate. In Hydrogenovibrio crunogenus (strain DSM 25203 / XCL-2) (Thiomicrospira crunogena), this protein is Bifunctional protein FolD 1.